The sequence spans 786 residues: Signal transducer and activator of transcription 5B (786 aa).

Residue Tyr-90 is modified to Phosphotyrosine. Ser-128 is modified (phosphoserine). Positions 589 to 686 constitute an SH2 domain; it reads WNDGAILGFV…EVYSKYYTPV (98 aa). Residues Tyr-682 and Tyr-699 each carry the phosphotyrosine modification.

Belongs to the transcription factor STAT family. As to quaternary structure, upon activation, forms a homodimer or a heterodimer with a related family member. Binds NR3C1. Interacts with NCOA1. Interacts with NMI. Interacts with SOCS7. Interacts (via SH2 domain) with INSR. Interacts with CPEB3; this inhibits STAT5B-mediated transcriptional activation. In terms of processing, tyrosine phosphorylated in response to signaling via activated KIT, resulting in translocation to the nucleus. Tyrosine phosphorylated in response to signaling via activated FLT3; wild-type FLT3 results in much weaker phosphorylation than constitutively activated mutant FLT3. Alternatively, can be phosphorylated by JAK2. Phosphorylation at Tyr-699 by PTK6 or HCK leads to an increase of its transcriptional activity.

The protein resides in the cytoplasm. It localises to the nucleus. Its function is as follows. Carries out a dual function: signal transduction and activation of transcription. Mediates cellular responses to the cytokine KITLG/SCF and other growth factors. Binds to the GAS element and activates PRL-induced transcription. Positively regulates hematopoietic/erythroid differentiation. This chain is Signal transducer and activator of transcription 5B (Stat5b), found in Rattus norvegicus (Rat).